A 252-amino-acid chain; its full sequence is 5'-nucleotidase SurE (252 aa).

Positions 8, 9, 39, and 91 each coordinate a divalent metal cation.

Belongs to the SurE nucleotidase family. A divalent metal cation is required as a cofactor.

The protein resides in the cytoplasm. It carries out the reaction a ribonucleoside 5'-phosphate + H2O = a ribonucleoside + phosphate. In terms of biological role, nucleotidase that shows phosphatase activity on nucleoside 5'-monophosphates. This chain is 5'-nucleotidase SurE, found in Legionella pneumophila (strain Corby).